The primary structure comprises 211 residues: Urease accessory protein UreG (211 aa).

11-18 serves as a coordination point for GTP; sequence GPVGAGKT.

The protein belongs to the SIMIBI class G3E GTPase family. UreG subfamily. In terms of assembly, homodimer. UreD, UreF and UreG form a complex that acts as a GTP-hydrolysis-dependent molecular chaperone, activating the urease apoprotein by helping to assemble the nickel containing metallocenter of UreC. The UreE protein probably delivers the nickel.

The protein localises to the cytoplasm. Facilitates the functional incorporation of the urease nickel metallocenter. This process requires GTP hydrolysis, probably effectuated by UreG. The protein is Urease accessory protein UreG of Actinobacillus pleuropneumoniae serotype 3 (strain JL03).